A 592-amino-acid chain; its full sequence is Ichor (592 aa).

A compositionally biased stretch (polar residues) spans 114–123 (NNNYMQSAYH). Disordered stretches follow at residues 114-156 (NNNY…VSSS), 343-377 (LQNR…QAPT), 416-439 (LSNP…MQAS), and 459-527 (HTTT…DLSG). The segment covering 124–148 (PQNQSNPTSTTQSNGGSNSNSNNSN) has biased composition (low complexity). Positions 356-369 (SSGGGGGANQGAGI) are enriched in gly residues. Positions 459-469 (HTTTASTTGSE) are enriched in polar residues. Over residues 488-500 (QQQQQQQQQQQQQ) the composition is skewed to low complexity. The span at 507-524 (PTTPQMSAISPSGFSASD) shows a compositional bias: polar residues. 2 consecutive C2H2-type zinc fingers follow at residues 536-558 (HRCS…LRTH) and 564-586 (FRCD…QQIH).

It is found in the nucleus. In terms of biological role, transcriptional activator. In tracheal terminal cells, regulates the transcription of factors involved in the formation of a mature apical extracellular matrix (aECM) which is essential for the integrity and shape of seamless tubes. The polypeptide is Ichor (Drosophila melanogaster (Fruit fly)).